The sequence spans 281 residues: MTAQILDGKTLAQQFEQEMRLRVDVLKAKANGHTPILATILVGADPASATYVKMKGNACQRVGMESVAIELSEETTTAQLLAKIDELNNNQDVHGILLQHPVPAQIDERACFDAISLEKDVDGVTCLGFGRMSMGEAAYGCATPKGIMRLLEHYQVELEGKHAVVVGRSAILGKPMAMMMLEANATVTICHSRTQNLPELVKQADIVVGAVGKPEFIKADWIKDGAVVVDAGFHPERCGDIELAPLVDRVAAYTPVPGGVGPMTINTLIFQTLQSGEKAFG.

NADP(+) contacts are provided by residues 167-169 (GRS) and Ser-192.

The protein belongs to the tetrahydrofolate dehydrogenase/cyclohydrolase family. As to quaternary structure, homodimer.

It catalyses the reaction (6R)-5,10-methylene-5,6,7,8-tetrahydrofolate + NADP(+) = (6R)-5,10-methenyltetrahydrofolate + NADPH. It carries out the reaction (6R)-5,10-methenyltetrahydrofolate + H2O = (6R)-10-formyltetrahydrofolate + H(+). Its pathway is one-carbon metabolism; tetrahydrofolate interconversion. Functionally, catalyzes the oxidation of 5,10-methylenetetrahydrofolate to 5,10-methenyltetrahydrofolate and then the hydrolysis of 5,10-methenyltetrahydrofolate to 10-formyltetrahydrofolate. The protein is Bifunctional protein FolD of Alcanivorax borkumensis (strain ATCC 700651 / DSM 11573 / NCIMB 13689 / SK2).